We begin with the raw amino-acid sequence, 116 residues long: Ly-6/neurotoxin-like protein 1 (116 aa).

The first 20 residues, 1–20 (MTPLLTLILVVLMGLPLAQA), serve as a signal peptide directing secretion. The region spanning 21–105 (LDCHVCAYNG…LATPATLALA (85 aa)) is the UPAR/Ly6 domain. 5 disulfide bridges follow: Cys23–Cys46, Cys26–Cys33, Cys39–Cys64, Cys68–Cys85, and Cys86–Cys91. Residue Asn92 is the site of GPI-anchor amidated asparagine attachment. Residues 93-116 (GAGLATPATLALAPILLATLWGLL) constitute a propeptide, removed in mature form.

As to quaternary structure, interacts with nAChRs containing alpha-4:beta-2 (CHRNA4:CHRNB2) and alpha-7 (CHRNA7) subunits. Interacts with CHRNA4 probably in the endoplasmic reticulum prior to nAChR pentameric assembly. Interacts with KCNA2/Potassium voltage-gated channel subfamily A member 2.

The protein resides in the cell membrane. Its subcellular location is the cell projection. It is found in the dendrite. It localises to the endoplasmic reticulum. Functionally, acts in different tissues through interaction to nicotinic acetylcholine receptors (nAChRs). The proposed role as modulator of nAChR activity seems to be dependent on the nAChR subtype and stoichiometry, and to involve an effect on nAChR trafficking and its cell surface expression, and on single channel properties of the nAChR inserted in the plasma membrane. Modulates functional properties of nicotinic acetylcholine receptors (nAChRs) to prevent excessive excitation, and hence neurodegeneration. Enhances desensitization by increasing both the rate and extent of desensitization of alpha-4:beta-2-containing nAChRs and slowing recovery from desensitization. Promotes large amplitude ACh-evoked currents through alpha-4:beta-2 nAChRs. Is involved in regulation of the nAChR pentameric assembly in the endoplasmic reticulum. Shifts stoichiometry from high sensitivity alpha-4(2):beta-2(3) to low sensitivity alpha-4(3):beta-2(2) nAChR. In vitro modulates alpha-3:beta-4-containing nAChRs. Reduces cell surface expression of (alpha-3:beta-4)(2):beta-4 and (alpha-3:beta-4)(2):alpha-5 nAChRs suggesting an interaction with nAChR alpha-3(-):(+)beta-4 subunit interfaces and an allosteric mode. Corresponding single channel effects characterized by decreased unitary conductance, altered burst proportions and enhanced desensitization/inactivation seem to depend on nAChR alpha:alpha subunit interfaces and are greater in (alpha-3:beta-2)(2):alpha-3 when compared to (alpha-3:beta-2)(2):alpha-5 nAChRs. Prevents plasticity in the primary visual cortex late in life. This chain is Ly-6/neurotoxin-like protein 1, found in Pan troglodytes (Chimpanzee).